A 419-amino-acid chain; its full sequence is ATP-dependent RNA helicase RhlB (419 aa).

Residues 9–37 (QRFSDLALHRIVQQAIKEKGFEFCTPIQA) carry the Q motif motif. The Helicase ATP-binding domain occupies 40-217 (LPITLKGQDI…FEHMNDPQYV (178 aa)). 53–60 (AQTGTGKT) contributes to the ATP binding site. A DEAD box motif is present at residues 163 to 166 (DEAD). Residues 241 to 388 (KMALLMTLLE…VSQYDAKALI (148 aa)) form the Helicase C-terminal domain.

The protein belongs to the DEAD box helicase family. RhlB subfamily. In terms of assembly, component of the RNA degradosome, which is a multiprotein complex involved in RNA processing and mRNA degradation.

It localises to the cytoplasm. The enzyme catalyses ATP + H2O = ADP + phosphate + H(+). Its function is as follows. DEAD-box RNA helicase involved in RNA degradation. Has RNA-dependent ATPase activity and unwinds double-stranded RNA. The sequence is that of ATP-dependent RNA helicase RhlB from Histophilus somni (strain 2336) (Haemophilus somnus).